The primary structure comprises 694 residues: TBC1 domain family member 14 (694 aa).

The residue at position 92 (serine 92) is a Phosphoserine. Disordered regions lie at residues 108 to 130 and 272 to 305; these read LPSC…KSST and TAQK…RKNL. Positions 272–289 are enriched in basic and acidic residues; that stretch reads TAQKDSKKTQKEYEDKAG. A Phosphoserine modification is found at serine 296. The 211-residue stretch at 402–612 folds into the Rab-GAP TBC domain; that stretch reads GIPPSVRGKV…RIWDVFCRDG (211 aa).

As to quaternary structure, interacts with ULK1. May interact with RAB11A and RAB11B, but does not exhibit any GTPase-activating activity toward these proteins. Interacts with TRAPPC8. PubMed:15758561 detected expression at the stage of sexual maturation in testis, mainly in the spermatocytes. No expression detected in the ovary, brain, heart, lung, liver and kidney. PubMed:15200410 detected expression in brain, heart, lung, liver, spleen and kidney but not in small intestine.

The protein resides in the golgi apparatus. The protein localises to the cis-Golgi network. It localises to the trans-Golgi network. In terms of biological role, plays a role in the regulation of starvation-induced autophagosome formation. Together with the TRAPPIII complex, regulates a constitutive trafficking step from peripheral recycling endosomes to the early Golgi, maintaining the cycling pool of ATG9 required for initiation of autophagy. The protein is TBC1 domain family member 14 (Tbc1d14) of Rattus norvegicus (Rat).